The primary structure comprises 311 residues: Malate dehydrogenase (311 aa).

NAD(+) is bound by residues 7–13 and aspartate 34; that span reads GAAGGIG. Arginine 81 and arginine 87 together coordinate substrate. NAD(+) is bound by residues asparagine 94 and 117 to 119; that span reads ITN. Substrate is bound by residues asparagine 119 and arginine 153. Histidine 177 serves as the catalytic Proton acceptor. An NAD(+)-binding site is contributed by methionine 227.

The protein belongs to the LDH/MDH superfamily. MDH type 1 family. In terms of assembly, homodimer.

It carries out the reaction (S)-malate + NAD(+) = oxaloacetate + NADH + H(+). Catalyzes the reversible oxidation of malate to oxaloacetate. The polypeptide is Malate dehydrogenase (Vibrio campbellii (strain ATCC BAA-1116)).